An 82-amino-acid chain; its full sequence is Small ribosomal subunit protein bS16 (82 aa).

Belongs to the bacterial ribosomal protein bS16 family.

The sequence is that of Small ribosomal subunit protein bS16 from Natranaerobius thermophilus (strain ATCC BAA-1301 / DSM 18059 / JW/NM-WN-LF).